Here is a 135-residue protein sequence, read N- to C-terminus: MSDHNLKDDDYWRSKLTDEEFRICREKGTEMPFSGKYVDTTEAGTYLCRCCNTPLFKSLAKFDAGCGWPSFFEPLEKGVITEEMDTSLGMVRTEIMCEACGCHLGHVFTDGPQPTGLRYCVNSASIQFEEEKNQS.

A MsrB domain is found at 9–131; sequence DDYWRSKLTD…NSASIQFEEE (123 aa). Positions 48, 51, 97, and 100 each coordinate Zn(2+). Cys-120 acts as the Nucleophile in catalysis.

It belongs to the MsrB Met sulfoxide reductase family. It depends on Zn(2+) as a cofactor.

The catalysed reaction is L-methionyl-[protein] + [thioredoxin]-disulfide + H2O = L-methionyl-(R)-S-oxide-[protein] + [thioredoxin]-dithiol. The polypeptide is Peptide methionine sulfoxide reductase MsrB (Teredinibacter turnerae (strain ATCC 39867 / T7901)).